The following is a 459-amino-acid chain: Light-independent protochlorophyllide reductase subunit N (459 aa).

3 residues coordinate [4Fe-4S] cluster: Cys22, Cys47, and Cys107.

Belongs to the BchN/ChlN family. Protochlorophyllide reductase is composed of three subunits; ChlL, ChlN and ChlB. Forms a heterotetramer of two ChlB and two ChlN subunits. Requires [4Fe-4S] cluster as cofactor.

Its subcellular location is the plastid. The protein resides in the chloroplast. It carries out the reaction chlorophyllide a + oxidized 2[4Fe-4S]-[ferredoxin] + 2 ADP + 2 phosphate = protochlorophyllide a + reduced 2[4Fe-4S]-[ferredoxin] + 2 ATP + 2 H2O. The protein operates within porphyrin-containing compound metabolism; chlorophyll biosynthesis (light-independent). Its function is as follows. Component of the dark-operative protochlorophyllide reductase (DPOR) that uses Mg-ATP and reduced ferredoxin to reduce ring D of protochlorophyllide (Pchlide) to form chlorophyllide a (Chlide). This reaction is light-independent. The NB-protein (ChlN-ChlB) is the catalytic component of the complex. This chain is Light-independent protochlorophyllide reductase subunit N, found in Pinus contorta (Shore pine).